The sequence spans 144 residues: D-aminoacyl-tRNA deacylase (144 aa).

Residues Gly-136–Pro-137 carry the Gly-cisPro motif, important for rejection of L-amino acids motif.

It belongs to the DTD family. As to quaternary structure, homodimer.

Its subcellular location is the cytoplasm. It catalyses the reaction glycyl-tRNA(Ala) + H2O = tRNA(Ala) + glycine + H(+). The enzyme catalyses a D-aminoacyl-tRNA + H2O = a tRNA + a D-alpha-amino acid + H(+). In terms of biological role, an aminoacyl-tRNA editing enzyme that deacylates mischarged D-aminoacyl-tRNAs. Also deacylates mischarged glycyl-tRNA(Ala), protecting cells against glycine mischarging by AlaRS. Acts via tRNA-based rather than protein-based catalysis; rejects L-amino acids rather than detecting D-amino acids in the active site. By recycling D-aminoacyl-tRNA to D-amino acids and free tRNA molecules, this enzyme counteracts the toxicity associated with the formation of D-aminoacyl-tRNA entities in vivo and helps enforce protein L-homochirality. The protein is D-aminoacyl-tRNA deacylase of Vibrio parahaemolyticus serotype O3:K6 (strain RIMD 2210633).